We begin with the raw amino-acid sequence, 313 residues long: Ketimine reductase mu-crystallin (313 aa).

Arginine 47 is a 3,3',5-triiodo-L-thyronine binding site. The NADPH site is built by serine 90, histidine 91, arginine 118, alanine 143, valine 145, glutamine 146, asparagine 167, arginine 168, threonine 169, asparagine 172, threonine 204, methionine 205, and valine 225. 3,3',5-triiodo-L-thyronine is bound at residue glutamate 256. Serine 291 provides a ligand contact to NADPH.

Belongs to the ornithine cyclodeaminase/mu-crystallin family. Homodimer. Binds the thyroid hormone triiodothyronine (T3); T3 binding inhibits enzymatic activity. As to expression, expressed in the spiral ligament of the cochlea (at protein level).

The protein localises to the cytoplasm. The enzyme catalyses L-pipecolate + NADP(+) = Delta(1)-piperideine-2-carboxylate + NADPH + H(+). The catalysed reaction is L-pipecolate + NAD(+) = Delta(1)-piperideine-2-carboxylate + NADH + H(+). It catalyses the reaction L-proline + NADP(+) = 1-pyrroline-2-carboxylate + NADPH + H(+). It carries out the reaction L-proline + NAD(+) = 1-pyrroline-2-carboxylate + NADH + H(+). The enzyme catalyses (3R)-1,4-thiomorpholine-3-carboxylate + NAD(+) = 3,4-dehydrothiomorpholine-3-carboxylate + NADH + 2 H(+). The catalysed reaction is (3R)-1,4-thiomorpholine-3-carboxylate + NADP(+) = 3,4-dehydrothiomorpholine-3-carboxylate + NADPH + 2 H(+). It catalyses the reaction (S)-cystathionine ketimine + NADH + 2 H(+) = (3R,5S)-2,3,5,6,7-pentahydro-1,4-thiazepine-3,5-dicarboxylate + NAD(+). It carries out the reaction (S)-cystathionine ketimine + NADPH + 2 H(+) = (3R,5S)-2,3,5,6,7-pentahydro-1,4-thiazepine-3,5-dicarboxylate + NADP(+). The enzyme catalyses (R)-lanthionine ketimine + NADPH + 2 H(+) = (3R,5R)-1,4-thiomorpholine-3,5-dicarboxylate + NADP(+). The catalysed reaction is Delta(2)-thiazoline-2-carboxylate + NADPH + 2 H(+) = L-thiazolidine-2-carboxylate + NADP(+). Its function is as follows. Catalyzes the NAD(P)H-dependent reduction of imine double bonds of a number of cyclic ketimine substrates, including sulfur-containing cyclic ketimines. Under physiological conditions, it efficiently catalyzes delta(1)-piperideine-2-carboxylate (P2C) and delta(1)-pyrroline-2-carboxylate (Pyr2C) reduction, suggesting a central role in lysine and glutamate metabolism. Additional substrates are delta(2)-thiazoline-2-carboxylate (T2C), 3,4-dehydrothiomorpholine-3-carboxylate (AECK), and (R)-lanthionine ketimine (LK) that is reduced at very low rate compared to other substrates. Also catalyzes the NAD(P)H-dependent reduction of (S)-cystathionine ketimine (CysK). The polypeptide is Ketimine reductase mu-crystallin (Mus musculus (Mouse)).